The primary structure comprises 610 residues: Elongation factor 4 (610 aa).

Residues 13 to 195 form the tr-type G domain; sequence SHIRNFSIVA…AIVRKLPAPK (183 aa). Residues 25–30 and 142–145 contribute to the GTP site; these read DHGKST and NKID.

Belongs to the TRAFAC class translation factor GTPase superfamily. Classic translation factor GTPase family. LepA subfamily.

It is found in the cell inner membrane. The catalysed reaction is GTP + H2O = GDP + phosphate + H(+). Required for accurate and efficient protein synthesis under certain stress conditions. May act as a fidelity factor of the translation reaction, by catalyzing a one-codon backward translocation of tRNAs on improperly translocated ribosomes. Back-translocation proceeds from a post-translocation (POST) complex to a pre-translocation (PRE) complex, thus giving elongation factor G a second chance to translocate the tRNAs correctly. Binds to ribosomes in a GTP-dependent manner. This is Elongation factor 4 from Rhizobium etli (strain CIAT 652).